The following is a 519-amino-acid chain: Aldehyde dehydrogenase X, mitochondrial (519 aa).

The transit peptide at M1 to T19 directs the protein to the mitochondrion. N6-acetyllysine is present on K53. Position 54 is an N6-acetyllysine; alternate (K54). An N6-succinyllysine; alternate modification is found at K54. The residue at position 83 (K83) is an N6-succinyllysine. G264–G269 serves as a coordination point for NAD(+). E287 acts as the Proton acceptor in catalysis. Catalysis depends on C321, which acts as the Nucleophile. K366, K385, K401, K416, and K428 each carry N6-acetyllysine; alternate. Residues K366, K385, K401, K416, and K428 each carry the N6-succinyllysine; alternate modification. An N6-acetyllysine modification is found at K431.

It belongs to the aldehyde dehydrogenase family. Homotetramer.

The protein localises to the mitochondrion matrix. It carries out the reaction an aldehyde + NAD(+) + H2O = a carboxylate + NADH + 2 H(+). Its pathway is alcohol metabolism; ethanol degradation; acetate from ethanol: step 2/2. ALDHs play a major role in the detoxification of alcohol-derived acetaldehyde. They are involved in the metabolism of corticosteroids, biogenic amines, neurotransmitters, and lipid peroxidation. The sequence is that of Aldehyde dehydrogenase X, mitochondrial (Aldh1b1) from Mus musculus (Mouse).